The primary structure comprises 106 residues: UPF0060 membrane protein RHE_CH01408 (106 aa).

Transmembrane regions (helical) follow at residues 4–24, 30–50, 59–79, and 86–106; these read IIYA…WAWL, AWWL…LTLV, FAAY…LIEG, and DIGG…APRA.

This sequence belongs to the UPF0060 family.

The protein localises to the cell inner membrane. In Rhizobium etli (strain ATCC 51251 / DSM 11541 / JCM 21823 / NBRC 15573 / CFN 42), this protein is UPF0060 membrane protein RHE_CH01408.